The primary structure comprises 463 residues: Cytochrome P450 4d8 (463 aa).

2 residues coordinate heme: Glu267 and Cys409.

It belongs to the cytochrome P450 family. It depends on heme as a cofactor.

Its subcellular location is the endoplasmic reticulum membrane. It localises to the microsome membrane. Its function is as follows. May be involved in the metabolism of insect hormones and in the breakdown of synthetic insecticides. This chain is Cytochrome P450 4d8 (Cyp4d8), found in Drosophila melanogaster (Fruit fly).